Here is a 123-residue protein sequence, read N- to C-terminus: Small ribosomal subunit protein uS12 (123 aa).

The disordered stretch occupies residues 1–45 (MPTINQLIRKKRQSGATRKKSPALQKSPQKRGVCLQVKTKTPKKP). A compositionally biased stretch (basic residues) spans 8-21 (IRKKRQSGATRKKS).

It belongs to the universal ribosomal protein uS12 family. As to quaternary structure, part of the 30S ribosomal subunit. Contacts proteins S8 and S17. May interact with IF1 in the 30S initiation complex.

In terms of biological role, with S4 and S5 plays an important role in translational accuracy. Interacts with and stabilizes bases of the 16S rRNA that are involved in tRNA selection in the A site and with the mRNA backbone. Located at the interface of the 30S and 50S subunits, it traverses the body of the 30S subunit contacting proteins on the other side and probably holding the rRNA structure together. The combined cluster of proteins S8, S12 and S17 appears to hold together the shoulder and platform of the 30S subunit. This is Small ribosomal subunit protein uS12 from Chlamydia muridarum (strain MoPn / Nigg).